The chain runs to 411 residues: Probable UDP-arabinose 4-epimerase 3 (411 aa).

Residues 1–13 (MLSFSRARSQGRN) show a composition bias toward polar residues. The segment at 1–22 (MLSFSRARSQGRNTRPLGGGME) is disordered. The Cytoplasmic segment spans residues 1–31 (MLSFSRARSQGRNTRPLGGGMEYLEPKRKSN). A helical; Signal-anchor for type II membrane protein transmembrane segment spans residues 32–50 (VMGKIILVVSLTALCIFML). Residues 51-411 (KHAPSFTSPT…KTHPHGYASS (361 aa)) lie on the Lumenal side of the membrane. Position 71-102 (71-102 (HVLVTGGAGYIGSHAALRLLKDSYRVTIVDNL)) interacts with NAD(+). The Proton acceptor role is filled by Tyr219.

It belongs to the NAD(P)-dependent epimerase/dehydratase family. NAD(+) serves as cofactor.

The protein localises to the golgi apparatus. It is found in the golgi stack membrane. It catalyses the reaction UDP-beta-L-arabinopyranose = UDP-alpha-D-xylose. It functions in the pathway nucleotide-sugar biosynthesis; UDP-L-arabinose biosynthesis; UDP-L-arabinose from UDP-alpha-D-xylose: step 1/1. The protein operates within cell wall biogenesis; cell wall polysaccharide biosynthesis. The protein is Probable UDP-arabinose 4-epimerase 3 of Arabidopsis thaliana (Mouse-ear cress).